Here is a 103-residue protein sequence, read N- to C-terminus: OMEGA-ectatommitoxin(02)-Rm1d (103 aa).

The signal sequence occupies residues 1–30 (MKDSYISIVIAYLMVTFILVSSMPIEGEKR). Cystine bridges form between Cys-39–Cys-54, Cys-49–Cys-70, and Cys-72–Cys-81. In terms of domain architecture, EGF-like spans 43-82 (LNDENYCFNGKCVHLVAQDEPGKPYYSCICDEFYIGERCG).

The protein belongs to the EGF domain peptide family. Expressed by the venom gland.

The protein resides in the secreted. Functionally, ant peptide with probable defensive activity which acts as a potent agonist of the mammalian epidermal growth factor receptor (EGFR). Mimics, both structurally and functionally, vertebrate epidermal growth factor (EGF) peptide hormones. In vivo, intraplantar injection in mice causes long-lasting (several days) hypersensitivity of the injected paw to both mechanical and thermal stimuli. Its long-lasting effect is unusual for venom toxins whose effects are usually immediate. One possible explanation is that it would reduce the duration of a nest attack, discourage future attacks, or enhance the actions of subsequent exposure to other pain-inducing venom peptides. The sequence is that of OMEGA-ectatommitoxin(02)-Rm1d from Rhytidoponera metallica (Australian green-headed ant).